A 377-amino-acid chain; its full sequence is SH2/SH3 adapter protein Nck1 (377 aa).

Ala2 is modified (N-acetylalanine). The SH3 1 domain maps to 2 to 61 (AEEVVVVAKFDYVAQQEQELDIKKNERLWLLDDSKSWWRVRNSMNKTGFVPSNYVERKNS). Phosphoserine occurs at positions 85, 91, and 96. At Tyr105 the chain carries Phosphotyrosine. The 60-residue stretch at 106 to 165 (DLNMPAFVKFNYMAEREDELSLIKGTKVIVMEKCSDGWWRGSYNGQIGWFPSNYVTEEGD) folds into the SH3 2 domain. Position 166 is a phosphoserine (Ser166). Positions 190-252 (QVLHVVQALY…PKNYVTIMQN (63 aa)) constitute an SH3 3 domain. The 95-residue stretch at 282–376 (WYYGKVTRHQ…GEKLYLVKHL (95 aa)) folds into the SH2 domain.

As to quaternary structure, interacts (via SH2 domain and SH3 domain 2) with EGFR. Interacts with PAK1 and SOS1. Interacts (via SH3 domains) with PKN2. Associates with BLNK, PLCG1, VAV1 and NCK1 in a B-cell antigen receptor-dependent fashion. Interacts with SOCS7. This interaction is required for nuclear import. Part of a complex containing PPP1R15B, PP1 and NCK1. Interacts with RALGPS1. Interacts with CAV2 (tyrosine phosphorylated form). Interacts with ADAM15. Interacts with FASLG. Directly interacts with RASA1. Interacts with isoform 4 of MINK1. Interacts with FLT1 (tyrosine phosphorylated). Interacts with KDR (tyrosine phosphorylated). Interacts (via SH2 domain) with EPHB1; activates the JUN cascade to regulate cell adhesion. Interacts with EPHA2. Interacts (via SH2 domain) with PDGFRB (tyrosine phosphorylated). Interacts with the inactive form of EIF2AK2/PKR. Interacts with PTPN1. Interacts with INSR/insulin receptor (in response to insulin stimulation); this interaction may mediate PTPN1 recruitment leading to INSR dephosphorylation. Interacts with CD3E (via Proline-rich sequence); the interaction is ligand dependent but independent of tyrosine kinase activation. Interacts with EGFR. Interacts with IRS1. Post-translationally, phosphorylated on Ser and Tyr residues. Phosphorylated in response to activation of EGFR and FcERI. Phosphorylated by activated PDGFRB.

It localises to the cytoplasm. The protein localises to the endoplasmic reticulum. The protein resides in the nucleus. Functionally, adapter protein which associates with tyrosine-phosphorylated growth factor receptors, such as KDR and PDGFRB, or their cellular substrates. Maintains low levels of EIF2S1 phosphorylation by promoting its dephosphorylation by PP1. Plays a role in the DNA damage response, not in the detection of the damage by ATM/ATR, but for efficient activation of downstream effectors, such as that of CHEK2. Plays a role in ELK1-dependent transcriptional activation in response to activated Ras signaling. Modulates the activation of EIF2AK2/PKR by dsRNA. May play a role in cell adhesion and migration through interaction with ephrin receptors. Also acts as an adpater protein for the T cell receptor complex (TCR-CD3E). Upon ligand engagement, is recruited by CD3E and promotes maturation of the immune synapse and T cell activation. This Mus musculus (Mouse) protein is SH2/SH3 adapter protein Nck1 (Nck1).